Consider the following 222-residue polypeptide: Glutathione S-transferase alpha-1 (222 aa).

N-acetylmethionine is present on M1. The GST N-terminal domain occupies 3–83 (GKPVLHYFNA…YIATKYDLYG (81 aa)). K4 carries the post-translational modification N6-succinyllysine. Glutathione-binding positions include Y9, K45, 54-55 (QV), and 67-68 (QT). The 124-residue stretch at 85-208 (DMKERALIDM…QPGSQRKLPV (124 aa)) folds into the GST C-terminal domain.

Belongs to the GST superfamily. Alpha family. Homodimer. Homodimer or heterodimer of GSTA1 and GSTA2.

The protein localises to the cytoplasm. It catalyses the reaction RX + glutathione = an S-substituted glutathione + a halide anion + H(+). The enzyme catalyses prostaglandin A2 + glutathione = prostaglandin A2-S-(R)-glutathione. The catalysed reaction is prostaglandin J2 + glutathione = prostaglandin J2-S-(R)-glutathione. It carries out the reaction (13S)-hydroperoxy-(9Z,11E)-octadecadienoate + 2 glutathione = (13S)-hydroxy-(9Z,11E)-octadecadienoate + glutathione disulfide + H2O. It catalyses the reaction androst-5-ene-3,17-dione = androst-4-ene-3,17-dione. Functionally, glutathione S-transferase that catalyzes the nucleophilic attack of the sulfur atom of glutathione on the electrophilic groups of a wide range of exogenous and endogenous compounds. Involved in the formation of glutathione conjugates of both prostaglandin A2 (PGA2) and prostaglandin J2 (PGJ2). It also catalyzes the isomerization of D5-androstene-3,17-dione (AD) into D4-androstene-3,17-dione and may therefore play an important role in hormone biosynthesis. Through its glutathione-dependent peroxidase activity toward the fatty acid hydroperoxide (13S)-hydroperoxy-(9Z,11E)-octadecadienoate/13-HPODE it is also involved in the metabolism of oxidized linoleic acid. The sequence is that of Glutathione S-transferase alpha-1 (Gsta1) from Rattus norvegicus (Rat).